Here is a 247-residue protein sequence, read N- to C-terminus: Adenosylcobinamide-GDP ribazoletransferase (247 aa).

The next 5 helical transmembrane spans lie at 34–54 (IITFPLIGLLLGAISGLVFMV), 59–79 (CGVPLAALFSVLVLALMTGGF), 113–133 (GGLALIFVVLAKILVLSELAL), 138–158 (ILASLAAACAVSRGIAALLMY), and 194–214 (VLLPGMHGVAAMVVTMVAIFI).

The protein belongs to the CobS family. It depends on Mg(2+) as a cofactor.

The protein resides in the cell inner membrane. The enzyme catalyses alpha-ribazole + adenosylcob(III)inamide-GDP = adenosylcob(III)alamin + GMP + H(+). It catalyses the reaction alpha-ribazole 5'-phosphate + adenosylcob(III)inamide-GDP = adenosylcob(III)alamin 5'-phosphate + GMP + H(+). It participates in cofactor biosynthesis; adenosylcobalamin biosynthesis; adenosylcobalamin from cob(II)yrinate a,c-diamide: step 7/7. Functionally, joins adenosylcobinamide-GDP and alpha-ribazole to generate adenosylcobalamin (Ado-cobalamin). Also synthesizes adenosylcobalamin 5'-phosphate from adenosylcobinamide-GDP and alpha-ribazole 5'-phosphate. The sequence is that of Adenosylcobinamide-GDP ribazoletransferase from Shigella dysenteriae serotype 1 (strain Sd197).